Reading from the N-terminus, the 321-residue chain is uncharacterized protein (321 aa).

The signal sequence occupies residues 1-22 (MKSIYKYTFMLFVFLFGTLMMA).

The protein belongs to the bacterial solute-binding protein 1 family. WtpA subfamily.

This is an uncharacterized protein from Petrotoga mobilis (strain DSM 10674 / SJ95).